The chain runs to 242 residues: ATP synthase subunit a (242 aa).

Transmembrane regions (helical) follow at residues 29 to 49 (SSIY…LAFY), 84 to 104 (FIPL…LGMT), 114 to 134 (IIVT…VGFV), 140 to 160 (FLTL…MIVI), 189 to 209 (VIAG…IPLM), and 210 to 230 (MILI…FTIL).

Belongs to the ATPase A chain family. F-type ATPases have 2 components, CF(1) - the catalytic core - and CF(0) - the membrane proton channel. CF(1) has five subunits: alpha(3), beta(3), gamma(1), delta(1), epsilon(1). CF(0) has three main subunits: a(1), b(2) and c(9-12). The alpha and beta chains form an alternating ring which encloses part of the gamma chain. CF(1) is attached to CF(0) by a central stalk formed by the gamma and epsilon chains, while a peripheral stalk is formed by the delta and b chains.

Its subcellular location is the cell inner membrane. Key component of the proton channel; it plays a direct role in the translocation of protons across the membrane. The chain is ATP synthase subunit a from Rickettsia massiliae (strain Mtu5).